A 258-amino-acid chain; its full sequence is uncharacterized protein (258 aa).

The next 7 membrane-spanning stretches (helical) occupy residues 8–28 (VFLA…IVWF), 38–58 (VFFI…GGVH), 70–90 (EAMQ…GIFE), 121–141 (LEAI…AFAI), 176–196 (LGGI…LLVL), 204–224 (PLFL…AVLY), and 231–251 (HAAA…YWIV).

It localises to the cell membrane. This is an uncharacterized protein from Bacillus subtilis (strain 168).